The chain runs to 121 residues: Apoptin (121 aa).

Disordered regions lie at residues 1-28 (MNAL…LETP) and 57-121 (LRSA…RIRL). Residues 58-70 (RSATADNSESTGF) show a composition bias toward polar residues. A compositionally biased stretch (basic and acidic residues) spans 88–102 (RSCDPSEYRVSELKE).

Belongs to the gyrovirus apoptin family.

The protein resides in the host nucleus. Functionally, may act as transcriptional regulator. Induces apoptosis in infected cells. Element of infectious replication cycle. The sequence is that of Apoptin (VP3) from Gallus gallus (Chicken).